Here is a 181-residue protein sequence, read N- to C-terminus: MNTKIRTDLILGSKRFSNYAWCFILMTGGIGFCLTGVGSYFNLHTILFVKFSDINFIPQGIVMMFYGTIAILFSLFLMYSIFTDVGGGYNKYDKEKKEIEIFRLGYNKKNKQMLLKYNFRDIKSIKIELKDDINPKREIYLVTKNKNQIPLTRIGEPLLLSDVENQAIELANFLNIPIEGI.

The next 2 helical transmembrane spans lie at 19–41 (YAWC…GSYF) and 61–83 (IVMM…SIFT).

Belongs to the Ycf4 family.

It is found in the plastid. The protein resides in the chloroplast thylakoid membrane. Functionally, seems to be required for the assembly of the photosystem I complex. The chain is Photosystem I assembly protein Ycf4 from Guillardia theta (Cryptophyte).